A 276-amino-acid polypeptide reads, in one-letter code: Casein kinase II subunit beta-3 (276 aa).

2 disordered regions span residues 1–22 (MYKE…LGGA) and 34–86 (KKLE…SEGD).

It belongs to the casein kinase 2 subunit beta family. As to quaternary structure, heterotetramer of two catalytic alpha subunits and two regulatory beta subunits. Interacts with CCA1. Interacts with LHY. Post-translationally, phosphorylated by alpha subunit.

It localises to the cytoplasm. The protein resides in the cytosol. Its subcellular location is the nucleus. Functionally, plays a complex role in regulating the basal catalytic activity of the alpha subunit. The tetrameric holoenzyme CK2, composed of two alpha and two beta subunits, phosphorylates the transcription factor PIF1 after an exposure to light, resulting in a proteasome-dependent degradation of PIF1 and promotion of photomorphogenesis. CK2 phosphorylates translation initiation factors. May participate in the regulation of the initiation of translation. Stimulates the binding of CCA1 to promoters. In Arabidopsis thaliana (Mouse-ear cress), this protein is Casein kinase II subunit beta-3 (CKB3).